The following is a 368-amino-acid chain: F-box/kelch-repeat protein At5g51250 (368 aa).

One can recognise an F-box domain in the interval 1-44 (MSSLPDDLLLSIFARISRLYYPTLSLVSKSFRSLLASPDLYKAR). Kelch repeat units lie at residues 116–163 (DIYN…VLDR), 165–218 (IYVA…CIDG), and 260–304 (LFYI…YGGK).

The protein is F-box/kelch-repeat protein At5g51250 of Arabidopsis thaliana (Mouse-ear cress).